Consider the following 197-residue polypeptide: UPF0301 protein BAV3012 (197 aa).

The protein belongs to the UPF0301 (AlgH) family.

The chain is UPF0301 protein BAV3012 from Bordetella avium (strain 197N).